The following is a 353-amino-acid chain: Photosystem II protein D1 (353 aa).

At T2 the chain carries N-acetylthreonine. A Phosphothreonine modification is found at T2. 3 consecutive transmembrane segments (helical) span residues 29-46 (YIGW…TATS), 118-133 (HFLL…EWEL), and 142-156 (WIAV…AATA). H118 serves as a coordination point for chlorophyll a. Y126 serves as a coordination point for pheophytin a. [CaMn4O5] cluster is bound by residues D170 and E189. A helical transmembrane segment spans residues 197 to 218 (FHMLGVAGVFGGSLFSAMHGSL). Residue H198 participates in chlorophyll a binding. A quinone-binding positions include H215 and 264–265 (SF). H215 provides a ligand contact to Fe cation. H272 is a Fe cation binding site. The helical transmembrane segment at 274–288 (FLAAWPVVGIWFTAL) threads the bilayer. The [CaMn4O5] cluster site is built by H332, E333, D342, and A344. The propeptide occupies 345 to 353 (AVEAPSTIG).

The protein belongs to the reaction center PufL/M/PsbA/D family. In terms of assembly, PSII is composed of 1 copy each of membrane proteins PsbA, PsbB, PsbC, PsbD, PsbE, PsbF, PsbH, PsbI, PsbJ, PsbK, PsbL, PsbM, PsbT, PsbX, PsbY, PsbZ, Psb30/Ycf12, at least 3 peripheral proteins of the oxygen-evolving complex and a large number of cofactors. It forms dimeric complexes. The D1/D2 heterodimer binds P680, chlorophylls that are the primary electron donor of PSII, and subsequent electron acceptors. It shares a non-heme iron and each subunit binds pheophytin, quinone, additional chlorophylls, carotenoids and lipids. D1 provides most of the ligands for the Mn4-Ca-O5 cluster of the oxygen-evolving complex (OEC). There is also a Cl(-1) ion associated with D1 and D2, which is required for oxygen evolution. The PSII complex binds additional chlorophylls, carotenoids and specific lipids. is required as a cofactor. Post-translationally, tyr-161 forms a radical intermediate that is referred to as redox-active TyrZ, YZ or Y-Z. C-terminally processed by CTPA; processing is essential to allow assembly of the oxygen-evolving complex and thus photosynthetic growth.

It localises to the plastid. It is found in the chloroplast thylakoid membrane. It catalyses the reaction 2 a plastoquinone + 4 hnu + 2 H2O = 2 a plastoquinol + O2. In terms of biological role, photosystem II (PSII) is a light-driven water:plastoquinone oxidoreductase that uses light energy to abstract electrons from H(2)O, generating O(2) and a proton gradient subsequently used for ATP formation. It consists of a core antenna complex that captures photons, and an electron transfer chain that converts photonic excitation into a charge separation. The D1/D2 (PsbA/PsbD) reaction center heterodimer binds P680, the primary electron donor of PSII as well as several subsequent electron acceptors. This is Photosystem II protein D1 from Lemna minor (Common duckweed).